A 102-amino-acid chain; its full sequence is MNQYDLNLILNPNLSAEQVQIEKDYIETALKNVGAEVSNLDDLGNRRLAYQVGKDREGYYLMYTIKAGGNPEKDIASSLRLRDHVRRVLVVKDRPEWKTKKA.

Belongs to the bacterial ribosomal protein bS6 family.

Binds together with bS18 to 16S ribosomal RNA. The sequence is that of Small ribosomal subunit protein bS6 from Deinococcus deserti (strain DSM 17065 / CIP 109153 / LMG 22923 / VCD115).